Consider the following 1226-residue polypeptide: Methionine synthase (1226 aa).

The 321-residue stretch at 6 to 326 folds into the Hcy-binding domain; that stretch reads RQQLEQQLKQ…EHIAAIAKAV (321 aa). Zn(2+) contacts are provided by Cys248, Cys311, and Cys312. One can recognise a Pterin-binding domain in the interval 357–618; it reads FVNVGERTNV…VPLKLREAVE (262 aa). A B12-binding N-terminal domain is found at 651 to 745; sequence SALEWRAWPV…FINAQKSGST (95 aa). Methylcob(III)alamin contacts are provided by residues Glu695, 757–761, His760, Ser805, Thr809, and Ala861; that span reads GDVHD. Residues 747–882 enclose the B12-binding domain; that stretch reads NGKILLATVK…SDEQRPGFIE (136 aa). In terms of domain architecture, AdoMet activation spans 898–1226; the sequence is KTPKSRPVTL…EKWLAPNLDA (329 aa). Residues Asp948, Arg1136, and 1191-1192 each bind S-adenosyl-L-methionine; that span reads YF.

It belongs to the vitamin-B12 dependent methionine synthase family. Requires methylcob(III)alamin as cofactor. Zn(2+) is required as a cofactor.

It carries out the reaction (6S)-5-methyl-5,6,7,8-tetrahydrofolate + L-homocysteine = (6S)-5,6,7,8-tetrahydrofolate + L-methionine. It functions in the pathway amino-acid biosynthesis; L-methionine biosynthesis via de novo pathway; L-methionine from L-homocysteine (MetH route): step 1/1. Catalyzes the transfer of a methyl group from methyl-cobalamin to homocysteine, yielding enzyme-bound cob(I)alamin and methionine. Subsequently, remethylates the cofactor using methyltetrahydrofolate. This chain is Methionine synthase (metH), found in Vibrio cholerae serotype O1 (strain ATCC 39315 / El Tor Inaba N16961).